The sequence spans 258 residues: Enoyl-[acyl-carrier-protein] reductase [NADH] FabI (258 aa).

Residues G14, 20 to 21 (SI), 67 to 68 (DV), and I95 contribute to the NAD(+) site. A98 lines the substrate pocket. Catalysis depends on proton acceptor residues Y148 and Y158. NAD(+)-binding positions include K165 and 194–198 (IRTLS).

Belongs to the short-chain dehydrogenases/reductases (SDR) family. FabI subfamily. In terms of assembly, homotetramer.

The enzyme catalyses a 2,3-saturated acyl-[ACP] + NAD(+) = a (2E)-enoyl-[ACP] + NADH + H(+). It catalyses the reaction (2E)-butenoyl-[ACP] + NADH + H(+) = butanoyl-[ACP] + NAD(+). It functions in the pathway lipid metabolism; fatty acid biosynthesis. Its activity is regulated as follows. Inhibited by triclosan and acrylamide. Its function is as follows. Catalyzes the reduction of a carbon-carbon double bond in an enoyl moiety that is covalently linked to an acyl carrier protein (ACP). Involved in the elongation cycle of fatty acid which are used in the lipid metabolism. The sequence is that of Enoyl-[acyl-carrier-protein] reductase [NADH] FabI (fabI) from Bacillus subtilis (strain 168).